The chain runs to 281 residues: Undecaprenyl-diphosphatase (281 aa).

Helical transmembrane passes span Met1–Ile21, Trp45–Ala65, Ser93–Phe113, Leu125–Val145, Ile155–Ala175, Ala195–Phe215, Phe227–Phe247, and Ser256–Phe276.

This sequence belongs to the UppP family.

It is found in the cell inner membrane. It carries out the reaction di-trans,octa-cis-undecaprenyl diphosphate + H2O = di-trans,octa-cis-undecaprenyl phosphate + phosphate + H(+). In terms of biological role, catalyzes the dephosphorylation of undecaprenyl diphosphate (UPP). Confers resistance to bacitracin. This Syntrophobacter fumaroxidans (strain DSM 10017 / MPOB) protein is Undecaprenyl-diphosphatase.